Consider the following 383-residue polypeptide: Dual-specificity RNA methyltransferase RlmN (383 aa).

E94 (proton acceptor) is an active-site residue. In terms of domain architecture, Radical SAM core spans 100-339 (DGDRATLCVS…VTVRRTRGDD (240 aa)). An intrachain disulfide couples C107 to C344. Residues C114, C118, and C121 each coordinate [4Fe-4S] cluster. Residues 168-169 (GE), S200, 222-224 (SLH), and N301 each bind S-adenosyl-L-methionine. The active-site S-methylcysteine intermediate is the C344.

It belongs to the radical SAM superfamily. RlmN family. It depends on [4Fe-4S] cluster as a cofactor.

The protein localises to the cytoplasm. It carries out the reaction adenosine(2503) in 23S rRNA + 2 reduced [2Fe-2S]-[ferredoxin] + 2 S-adenosyl-L-methionine = 2-methyladenosine(2503) in 23S rRNA + 5'-deoxyadenosine + L-methionine + 2 oxidized [2Fe-2S]-[ferredoxin] + S-adenosyl-L-homocysteine. The enzyme catalyses adenosine(37) in tRNA + 2 reduced [2Fe-2S]-[ferredoxin] + 2 S-adenosyl-L-methionine = 2-methyladenosine(37) in tRNA + 5'-deoxyadenosine + L-methionine + 2 oxidized [2Fe-2S]-[ferredoxin] + S-adenosyl-L-homocysteine. Its function is as follows. Specifically methylates position 2 of adenine 2503 in 23S rRNA and position 2 of adenine 37 in tRNAs. m2A2503 modification seems to play a crucial role in the proofreading step occurring at the peptidyl transferase center and thus would serve to optimize ribosomal fidelity. The polypeptide is Dual-specificity RNA methyltransferase RlmN (Aliivibrio salmonicida (strain LFI1238) (Vibrio salmonicida (strain LFI1238))).